Consider the following 561-residue polypeptide: uncharacterized protein (561 aa).

The signal sequence occupies residues 1–24; sequence MELGAWRSILYIAFLFAITRHAFC. Residues 25-509 are Lumenal-facing; it reads KAVNLVHSPE…GYVYLSEIKQ (485 aa). A helical membrane pass occupies residues 510–530; that stretch reads YSSLILISLWISLILFVSFLN. The Cytoplasmic segment spans residues 531 to 561; it reads RRLILHYSFESVHQLKTLTRKFIYSSLLKQD.

The protein resides in the endoplasmic reticulum membrane. It localises to the golgi apparatus membrane. This is an uncharacterized protein from Schizosaccharomyces pombe (strain 972 / ATCC 24843) (Fission yeast).